A 500-amino-acid polypeptide reads, in one-letter code: Cytochrome P450 2D20 (500 aa).

Residue C446 coordinates heme.

The protein belongs to the cytochrome P450 family. The cofactor is heme.

It is found in the endoplasmic reticulum membrane. The protein resides in the microsome membrane. This Mesocricetus auratus (Golden hamster) protein is Cytochrome P450 2D20 (CYP2D20).